We begin with the raw amino-acid sequence, 54 residues long: Small ribosomal subunit protein uS14 (54 aa).

Residues C19, C22, C37, and C40 each coordinate Zn(2+).

This sequence belongs to the universal ribosomal protein uS14 family. Zinc-binding uS14 subfamily. Part of the 30S ribosomal subunit. It depends on Zn(2+) as a cofactor.

Binds 16S rRNA, required for the assembly of 30S particles. This chain is Small ribosomal subunit protein uS14, found in Sulfolobus acidocaldarius (strain ATCC 33909 / DSM 639 / JCM 8929 / NBRC 15157 / NCIMB 11770).